The chain runs to 36 residues: Peroxiredoxin-4 (36 aa).

Belongs to the peroxiredoxin family. AhpC/Prx1 subfamily. Homodimer; disulfide-linked, upon oxidation. In terms of tissue distribution, venom gland.

The protein localises to the secreted. It catalyses the reaction a hydroperoxide + [thioredoxin]-dithiol = an alcohol + [thioredoxin]-disulfide + H2O. Functionally, venom peroxiredoxin enzyme that may play a role as part of a redox pathway leading to the structural/functional diversification of toxins through a disulfide bond engineering mechanism. This is Peroxiredoxin-4 from Crotalus atrox (Western diamondback rattlesnake).